The primary structure comprises 252 residues: Imidazole glycerol phosphate synthase subunit HisF (252 aa).

Residues aspartate 11 and aspartate 130 contribute to the active site.

Belongs to the HisA/HisF family. Heterodimer of HisH and HisF.

The protein resides in the cytoplasm. The catalysed reaction is 5-[(5-phospho-1-deoxy-D-ribulos-1-ylimino)methylamino]-1-(5-phospho-beta-D-ribosyl)imidazole-4-carboxamide + L-glutamine = D-erythro-1-(imidazol-4-yl)glycerol 3-phosphate + 5-amino-1-(5-phospho-beta-D-ribosyl)imidazole-4-carboxamide + L-glutamate + H(+). Its pathway is amino-acid biosynthesis; L-histidine biosynthesis; L-histidine from 5-phospho-alpha-D-ribose 1-diphosphate: step 5/9. Functionally, IGPS catalyzes the conversion of PRFAR and glutamine to IGP, AICAR and glutamate. The HisF subunit catalyzes the cyclization activity that produces IGP and AICAR from PRFAR using the ammonia provided by the HisH subunit. The chain is Imidazole glycerol phosphate synthase subunit HisF from Alkaliphilus metalliredigens (strain QYMF).